Consider the following 555-residue polypeptide: Benzoyl-CoA-dihydrodiol lyase (555 aa).

The protein belongs to the benzoyl-CoA oxygenase component C family. In terms of assembly, homodimer.

The catalysed reaction is 2,3-epoxy-2,3-dihydrobenzoyl-CoA + 2 H2O = (3Z)-6-oxohex-3-enoyl-CoA + formate + H(+). Its function is as follows. Catalyzes the ring opening of 2,3-epoxy-2,3-dihydroxybenzoyl-CoA to form 3,4-didehydroadipyl-CoA semialdehyde. This Aromatoleum evansii (Azoarcus evansii) protein is Benzoyl-CoA-dihydrodiol lyase (boxC).